Here is a 470-residue protein sequence, read N- to C-terminus: 3-isopropylmalate dehydratase large subunit (470 aa).

Cys347, Cys407, and Cys410 together coordinate [4Fe-4S] cluster.

This sequence belongs to the aconitase/IPM isomerase family. LeuC type 1 subfamily. Heterodimer of LeuC and LeuD. The cofactor is [4Fe-4S] cluster.

It carries out the reaction (2R,3S)-3-isopropylmalate = (2S)-2-isopropylmalate. It participates in amino-acid biosynthesis; L-leucine biosynthesis; L-leucine from 3-methyl-2-oxobutanoate: step 2/4. Functionally, catalyzes the isomerization between 2-isopropylmalate and 3-isopropylmalate, via the formation of 2-isopropylmaleate. The protein is 3-isopropylmalate dehydratase large subunit of Shewanella amazonensis (strain ATCC BAA-1098 / SB2B).